Consider the following 223-residue polypeptide: Adenylate kinase 4, mitochondrial (223 aa).

An a ribonucleoside 5'-triphosphate-binding site is contributed by 15–20; the sequence is GSGKGT. Residues 35-64 are NMP; that stretch reads SSGHLLRENLKTGTEVGDVAKQYLEKGLLV. S36 and R41 together coordinate AMP. At K60 the chain carries N6-succinyllysine. AMP is bound by residues 62–64, 89–92, and Q96; these read LLV and GFPR. An LID region spans residues 125-162; it reads RRWIHPSSGRVYNLDFNPPQVQGIDDITGEPLVQQEDD. Residues R126 and 135–136 each bind a ribonucleoside 5'-triphosphate; that span reads VY. R170 serves as a coordination point for AMP. K175 is modified (N6-acetyllysine). N6-acetyllysine; alternate occurs at positions 179 and 186. An N6-succinyllysine; alternate mark is found at K179 and K186. T199 is an a ribonucleoside 5'-triphosphate binding site.

This sequence belongs to the adenylate kinase family. AK3 subfamily. As to quaternary structure, monomer. Interacts with SLC25A5/ANT2. In terms of tissue distribution, expressed in kidney, liver, stomach, brain, spinal cord, heart, ovary, oviduct, colon, jejunum, ileum and testis (at protein level). In the brain, expressed in the pyramidal cells of the cerebrum and glial cells in the cerebellum (at protein level). In the heart, expressed by myocytes (at protein level). In the kidney, expressed in the proximal to distal tubule in the cortex and the outer and inner zones of the medulla (at protein level). In the stomach, expressed in stratified squamous epithelia in the forestomach and in the gastric pit and mucus producing cells of the glandular stomach (at protein level). Expressed in epithelial cells of the jejunum, ileum, and colon (at protein level). In the testis, expressed by spermatocytes (at protein level). In the ovaries, expressed by oocytes, follicular epithelial cells, and corpus luteum cells (at protein level). In the oviduct, expressed in the epithelia of the isthmus and the ciliated cells of the ampulla (at protein level). Expressed in the pyramidal cells in the hippocampus.

It localises to the mitochondrion matrix. The catalysed reaction is a ribonucleoside 5'-phosphate + ATP = a ribonucleoside 5'-diphosphate + ADP. The enzyme catalyses AMP + ATP = 2 ADP. It catalyses the reaction GTP + AMP = GDP + ADP. It carries out the reaction CMP + ATP = CDP + ADP. The catalysed reaction is GTP + CMP = CDP + GDP. The enzyme catalyses dAMP + ATP = dADP + ADP. It catalyses the reaction dCMP + ATP = dCDP + ADP. It carries out the reaction a 2'-deoxyribonucleoside 5'-diphosphate + ATP = a 2'-deoxyribonucleoside 5'-triphosphate + ADP. The catalysed reaction is a ribonucleoside 5'-diphosphate + ATP = a ribonucleoside 5'-triphosphate + ADP. The enzyme catalyses GDP + ATP = GTP + ADP. It catalyses the reaction CDP + GTP = CTP + GDP. It carries out the reaction CDP + ATP = CTP + ADP. The catalysed reaction is UDP + ATP = UTP + ADP. The enzyme catalyses GTP + UDP = UTP + GDP. It catalyses the reaction dADP + GTP = dATP + GDP. It carries out the reaction dCDP + GTP = dCTP + GDP. The catalysed reaction is dCDP + ATP = dCTP + ADP. The enzyme catalyses dGDP + ATP = dGTP + ADP. It catalyses the reaction dTDP + GTP = dTTP + GDP. It carries out the reaction dTDP + ATP = dTTP + ADP. Its function is as follows. Broad-specificity mitochondrial nucleoside phosphate kinase involved in cellular nucleotide homeostasis by catalyzing nucleoside-phosphate interconversions. Similar to other adenylate kinases, preferentially catalyzes the phosphorylation of the nucleoside monophosphate AMP with ATP as phosphate donor to produce ADP. Phosphorylates only AMP when using GTP as phosphate donor. In vitro, can also catalyze the phosphorylation of CMP, dAMP and dCMP and use GTP as an alternate phosphate donor. Moreover, exhibits a diphosphate kinase activity, producing ATP, CTP, GTP, UTP, TTP, dATP, dCTP and dGTP from the corresponding diphosphate substrates with either ATP or GTP as phosphate donors. Plays a role in controlling cellular ATP levels by regulating phosphorylation and activation of the energy sensor protein kinase AMPK. Plays a protective role in the cellular response to oxidative stress. This Mus musculus (Mouse) protein is Adenylate kinase 4, mitochondrial.